Here is a 315-residue protein sequence, read N- to C-terminus: Putative serine/threonine-protein phosphatase PP2A-4 catalytic subunit (315 aa).

Mn(2+) is bound by residues aspartate 63, histidine 65, aspartate 91, and asparagine 123. Histidine 124 (proton donor) is an active-site residue. Positions 173 and 247 each coordinate Mn(2+).

It belongs to the PPP phosphatase family. PP-2A subfamily. It depends on Mn(2+) as a cofactor.

It is found in the cytoplasm. The enzyme catalyses O-phospho-L-seryl-[protein] + H2O = L-seryl-[protein] + phosphate. It catalyses the reaction O-phospho-L-threonyl-[protein] + H2O = L-threonyl-[protein] + phosphate. The sequence is that of Putative serine/threonine-protein phosphatase PP2A-4 catalytic subunit (PP2A4) from Oryza sativa subsp. indica (Rice).